A 519-amino-acid polypeptide reads, in one-letter code: Polyamine aminopropyltransferase (519 aa).

7 helical membrane-spanning segments follow: residues 17–37 (LLLV…LALV), 53–73 (LIVA…KPFL), 86–106 (LLGL…AVVG), 109–129 (LWML…ELPL), 158–178 (LGAL…LGMM), 180–200 (GAAA…CVLL), and 208–228 (QFIR…TVLV). The spermidine synthase stretch occupies residues 200 to 463 (LRHLLPRAQF…FQLCGPEGTE (264 aa)). Positions 225-459 (TVLVRSDGIV…GDWGFQLCGP (235 aa)) constitute a PABS domain. Glutamine 255 contacts S-methyl-5'-thioadenosine. Aspartate 307 contacts spermidine. S-methyl-5'-thioadenosine-binding positions include glutamate 326 and 358–359 (DA). Aspartate 379 (proton acceptor) is an active-site residue.

The protein belongs to the spermidine/spermine synthase family. As to quaternary structure, homodimer or homotetramer.

Its subcellular location is the cell membrane. It catalyses the reaction S-adenosyl 3-(methylsulfanyl)propylamine + putrescine = S-methyl-5'-thioadenosine + spermidine + H(+). Its pathway is amine and polyamine biosynthesis; spermidine biosynthesis; spermidine from putrescine: step 1/1. Its function is as follows. Catalyzes the irreversible transfer of a propylamine group from the amino donor S-adenosylmethioninamine (decarboxy-AdoMet) to putrescine (1,4-diaminobutane) to yield spermidine. The polypeptide is Polyamine aminopropyltransferase (Corynebacterium efficiens (strain DSM 44549 / YS-314 / AJ 12310 / JCM 11189 / NBRC 100395)).